A 553-amino-acid polypeptide reads, in one-letter code: Solute carrier family 22 member 12 (553 aa).

The chain crosses the membrane as a helical span at residues 16 to 36 (FQLLQAVALVTPILWVTTQNM). 3 N-linked (GlcNAc...) asparagine glycosylation sites follow: Asn-56, Asn-102, and Asn-107. 11 consecutive transmembrane segments (helical) span residues 146-166 (PMAQ…CGHA), 182-202 (LVSV…YCLF), 204-224 (FLVA…LMEW), 232-252 (LMMT…GSVA), 260-280 (MLQL…WWLP), 351-371 (FISM…ALDL), 378-398 (IFLL…GSLL), 407-427 (LCQA…ILVP), 435-455 (SSLA…VTIF), 466-486 (MTAV…GPLV), and 495-515 (WLPL…ALLL). Ser-534 bears the Phosphoserine mark.

It belongs to the major facilitator (TC 2.A.1) superfamily. Organic cation transporter (TC 2.A.1.19) family. In terms of assembly, interacts with PDZK1. N-glycosylated. As to expression, expressed in the proximal tubular epithelial cells in kidney.

Its subcellular location is the apical cell membrane. The catalysed reaction is urate(out) + (S)-lactate(in) = urate(in) + (S)-lactate(out). The enzyme catalyses nicotinate(in) + urate(out) = nicotinate(out) + urate(in). It carries out the reaction urate(out) + n chloride(in) = urate(in) + n chloride(out). It catalyses the reaction orotate(out) + nicotinate(in) = orotate(in) + nicotinate(out). In terms of biological role, electroneutral antiporter that translocates urate across the apical membrane of proximal tubular cells in exchange for monovalent organic or inorganic anions. Involved in renal reabsorption of urate and helps maintaining blood levels of uric acid. Mediates urate uptake by an exchange with organic anions such as (S)-lactate and nicotinate, and inorganic anion Cl(-). Other inorganic anions such as Br(-), I(-) and NO3(-) may also act as counteranions that exchange for urate. Also mediates orotate tubular uptake coupled with nicotinate efflux and to a lesser extent with lactate efflux, therefore displaying a potential role in orotate renal reabsorption. Orotate transport is Cl(-)-dependent. The polypeptide is Solute carrier family 22 member 12 (Slc22a12) (Rattus norvegicus (Rat)).